The primary structure comprises 106 residues: Thiosulfate sulfurtransferase GlpE (106 aa).

One can recognise a Rhodanese domain in the interval 17-105; that stretch reads SRGEARLVDI…WHRASLPVEA (89 aa). Cysteine 65 acts as the Cysteine persulfide intermediate in catalysis.

Belongs to the GlpE family.

The protein localises to the cytoplasm. The catalysed reaction is thiosulfate + hydrogen cyanide = thiocyanate + sulfite + 2 H(+). The enzyme catalyses thiosulfate + [thioredoxin]-dithiol = [thioredoxin]-disulfide + hydrogen sulfide + sulfite + 2 H(+). In terms of biological role, transferase that catalyzes the transfer of sulfur from thiosulfate to thiophilic acceptors such as cyanide or dithiols. May function in a CysM-independent thiosulfate assimilation pathway by catalyzing the conversion of thiosulfate to sulfite, which can then be used for L-cysteine biosynthesis. This is Thiosulfate sulfurtransferase GlpE from Vibrio vulnificus (strain CMCP6).